The primary structure comprises 433 residues: Enolase (433 aa).

Glutamine 167 is a (2R)-2-phosphoglycerate binding site. Glutamate 209 serves as the catalytic Proton donor. Mg(2+) contacts are provided by aspartate 246, glutamate 291, and aspartate 318. (2R)-2-phosphoglycerate contacts are provided by lysine 343, arginine 372, serine 373, and lysine 394. The Proton acceptor role is filled by lysine 343.

The protein belongs to the enolase family. As to quaternary structure, component of the RNA degradosome, a multiprotein complex involved in RNA processing and mRNA degradation. It depends on Mg(2+) as a cofactor.

It is found in the cytoplasm. The protein resides in the secreted. Its subcellular location is the cell surface. The catalysed reaction is (2R)-2-phosphoglycerate = phosphoenolpyruvate + H2O. It functions in the pathway carbohydrate degradation; glycolysis; pyruvate from D-glyceraldehyde 3-phosphate: step 4/5. Catalyzes the reversible conversion of 2-phosphoglycerate (2-PG) into phosphoenolpyruvate (PEP). It is essential for the degradation of carbohydrates via glycolysis. The sequence is that of Enolase from Hamiltonella defensa subsp. Acyrthosiphon pisum (strain 5AT).